A 75-amino-acid polypeptide reads, in one-letter code: Chaplin-D (75 aa).

The first 23 residues, methionine 1–alanine 23, serve as a signal peptide directing secretion. The Chaplin domain maps to serine 34–asparagine 74. Residues cysteine 54 and cysteine 72 are joined by a disulfide bond.

It belongs to the chaplin family. Short chaplin subfamily.

It is found in the cell surface. It localises to the secreted. The protein localises to the cell wall. Its subcellular location is the fimbrium. In terms of biological role, one of 8 partially redundant surface-active proteins required for efficient formation of aerial mycelium; the short chaplins assemble into a hydrophobic, amyloidal fibrillar surface layer that envelopes and protects aerial hyphae and spores, presumably anchored to the long chaplins. Chaplins have an overlapping function with the surface-active SapB peptide; chaplins are essential on minimal medium while on rich medium both chaplins and SapB are required for efficient aerial hyphae formation. Chaplins are also involved in cell attachment to a hydrophobic surface. Forms amyloid fibrils in vitro probably composed of stacked beta-sheets, at low extracellular concentrations individually restores the ability to form aerial hyphae to a chaplin-deficient strain. A small chaplin extract (ChpD, ChpE, ChpF, ChpG and ChpH) self-assembles into 2 different amyloids; small fibrils at the air-water interface form an amphipathic membrane that resembles spore-surface structures involved in aerial hyphae formation, and hydrophilic fibrils in solution that resemble the fibers that attach cells to a hydrophobic surface. At the air-water interface the hydrophilic surface is in contact with water (probably equivalent to the peptidoglycan layer), while the hydrophobic face is exposed to the air, making the surface of the aerial hyphae hydrophobic. A minimal chaplin strain capable of forming aerial mycelium/hyphae on minimal medium contains ChpC, ChpE and ChpH. The strain also has restored rodlet formation on the hyphae surface. A second minimal chaplin strain with ChpA, ChpD and ChpE makes slightly less robust hyphae. A small chaplin extract applied to a chaplin-deficient strain restores aerial hyphae formation. The small chaplin extract forms an amyloid-like structure similar to that seen on the surface of cells without rodlets (rdlA-rdlB deletions), and is highly surface active, reducing surface tension from 72 to 26 mJ/m(2), which probably allows escape of hyphae from an aqueous environment into air. The polypeptide is Chaplin-D (Streptomyces coelicolor (strain ATCC BAA-471 / A3(2) / M145)).